Consider the following 287-residue polypeptide: ATP synthase gamma chain (287 aa).

It belongs to the ATPase gamma chain family. F-type ATPases have 2 components, CF(1) - the catalytic core - and CF(0) - the membrane proton channel. CF(1) has five subunits: alpha(3), beta(3), gamma(1), delta(1), epsilon(1). CF(0) has three main subunits: a, b and c.

The protein localises to the cell membrane. Produces ATP from ADP in the presence of a proton gradient across the membrane. The gamma chain is believed to be important in regulating ATPase activity and the flow of protons through the CF(0) complex. The polypeptide is ATP synthase gamma chain (Geobacillus stearothermophilus (Bacillus stearothermophilus)).